The sequence spans 122 residues: Large ribosomal subunit protein uL14 (122 aa).

The protein belongs to the universal ribosomal protein uL14 family. As to quaternary structure, part of the 50S ribosomal subunit. Forms a cluster with proteins L3 and L19. In the 70S ribosome, L14 and L19 interact and together make contacts with the 16S rRNA in bridges B5 and B8.

Binds to 23S rRNA. Forms part of two intersubunit bridges in the 70S ribosome. The chain is Large ribosomal subunit protein uL14 from Nitratiruptor sp. (strain SB155-2).